The chain runs to 404 residues: LL-diaminopimelate aminotransferase (404 aa).

Substrate-binding residues include Y15 and G42. Residues Y72, 108-109 (AK), Y132, N188, Y219, and 247-249 (SFS) contribute to the pyridoxal 5'-phosphate site. The substrate site is built by K109, Y132, and N188. Position 250 is an N6-(pyridoxal phosphate)lysine (K250). 2 residues coordinate pyridoxal 5'-phosphate: R258 and N288. Residues N288 and R384 each coordinate substrate.

This sequence belongs to the class-I pyridoxal-phosphate-dependent aminotransferase family. LL-diaminopimelate aminotransferase subfamily. As to quaternary structure, homodimer. Requires pyridoxal 5'-phosphate as cofactor.

It carries out the reaction (2S,6S)-2,6-diaminopimelate + 2-oxoglutarate = (S)-2,3,4,5-tetrahydrodipicolinate + L-glutamate + H2O + H(+). The protein operates within amino-acid biosynthesis; L-lysine biosynthesis via DAP pathway; LL-2,6-diaminopimelate from (S)-tetrahydrodipicolinate (aminotransferase route): step 1/1. In terms of biological role, involved in the synthesis of meso-diaminopimelate (m-DAP or DL-DAP), required for both lysine and peptidoglycan biosynthesis. Catalyzes the direct conversion of tetrahydrodipicolinate to LL-diaminopimelate. This Lachnospira eligens (strain ATCC 27750 / DSM 3376 / VPI C15-48 / C15-B4) (Eubacterium eligens) protein is LL-diaminopimelate aminotransferase.